The primary structure comprises 252 residues: Ribosomal RNA large subunit methyltransferase E (252 aa).

S-adenosyl-L-methionine-binding residues include glycine 48, tryptophan 50, aspartate 68, aspartate 84, and aspartate 107. The Proton acceptor role is filled by lysine 147. One can recognise a TRAM domain in the interval 194-252; that stretch reads PVREGDTLEVEIDNLGDEGDGVAKVDGYTLFVSGAEPGDAPEVRVTDVKPRFGFAETLE.

Belongs to the class I-like SAM-binding methyltransferase superfamily. RNA methyltransferase RlmE family.

It is found in the cytoplasm. It catalyses the reaction uridine(2552) in 23S rRNA + S-adenosyl-L-methionine = 2'-O-methyluridine(2552) in 23S rRNA + S-adenosyl-L-homocysteine + H(+). Its function is as follows. Specifically methylates the uridine in position 2552 of 23S rRNA at the 2'-O position of the ribose in the fully assembled 50S ribosomal subunit. The chain is Ribosomal RNA large subunit methyltransferase E from Natronomonas pharaonis (strain ATCC 35678 / DSM 2160 / CIP 103997 / JCM 8858 / NBRC 14720 / NCIMB 2260 / Gabara) (Halobacterium pharaonis).